A 519-amino-acid chain; its full sequence is Ribonuclease Y (519 aa).

Residues 3 to 23 traverse the membrane as a helical segment; that stretch reads PMTVLISILLTLLGLVVGYYV. The region spanning 209–272 is the KH domain; that stretch reads TVSVVNLPND…ETARIALDKL (64 aa). The 94-residue stretch at 335–428 folds into the HD domain; the sequence is VLKHSMEVAF…VAAADALSAA (94 aa).

The protein belongs to the RNase Y family.

The protein localises to the cell membrane. Endoribonuclease that initiates mRNA decay. This is Ribonuclease Y from Bacillus velezensis (strain DSM 23117 / BGSC 10A6 / LMG 26770 / FZB42) (Bacillus amyloliquefaciens subsp. plantarum).